The primary structure comprises 178 residues: MYHRLILLALIGTTMANVIPFSMSTIPEEYKEFIPEEVRNFYKDLTVEDKEILRELASKHATFANEDAALEALKAKSDNLYKNAVELRNFVKAKIDSLKPDAKTFVDEIIAKARSLRSDDGHKLDTEKIKQAARDIIAKYQALSEETKEELKVTFPAIAKIIGNEKLKRNASTFLQKN.

The N-terminal stretch at 1–16 (MYHRLILLALIGTTMA) is a signal peptide. 2 coiled-coil regions span residues 67-89 (DAAL…ELRN) and 130-153 (KQAA…ELKV).

Belongs to the fatty-acid and retinol-binding protein (FARBP) family. In terms of processing, not glycosylated.

It is found in the secreted. Functionally, binds retinol and different fatty acids. The sequence is that of Fatty-acid and retinol-binding protein 1 from Wuchereria bancrofti.